Here is a 411-residue protein sequence, read N- to C-terminus: Small ribosomal subunit protein bS1c (411 aa).

Residues 1-41 (MASLAQQLAGGLRCPPLSNSNLSKPFSPKHTLKPRFSPIVS) constitute a chloroplast transit peptide. 3 S1 motif domains span residues 96–166 (GSRV…LSLR), 184–248 (DVVV…MSNR), and 261–329 (GSVV…LSTK).

Belongs to the bacterial ribosomal protein bS1 family. Component of the chloroplast small ribosomal subunit (SSU). Mature 70S chloroplast ribosomes of higher plants consist of a small (30S) and a large (50S) subunit. The 30S small subunit contains 1 molecule of ribosomal RNA (16S rRNA) and 24 different proteins. The 50S large subunit contains 3 rRNA molecules (23S, 5S and 4.5S rRNA) and 33 different proteins.

It is found in the plastid. The protein localises to the chloroplast. In terms of biological role, component of the chloroplast ribosome (chloro-ribosome), a dedicated translation machinery responsible for the synthesis of chloroplast genome-encoded proteins, including proteins of the transcription and translation machinery and components of the photosynthetic apparatus. Actively engaged in the initiation complex formation via a strong mRNA-binding activity. Possesses a poly(A)-binding activity which might play a role as a control element in chloroplast mRNA translation. In Spinacia oleracea (Spinach), this protein is Small ribosomal subunit protein bS1c (RPS1).